We begin with the raw amino-acid sequence, 208 residues long: ATP-dependent Clp protease proteolytic subunit (208 aa).

S105 acts as the Nucleophile in catalysis. The active site involves H130.

Belongs to the peptidase S14 family. In terms of assembly, fourteen ClpP subunits assemble into 2 heptameric rings which stack back to back to give a disk-like structure with a central cavity, resembling the structure of eukaryotic proteasomes.

Its subcellular location is the cytoplasm. It catalyses the reaction Hydrolysis of proteins to small peptides in the presence of ATP and magnesium. alpha-casein is the usual test substrate. In the absence of ATP, only oligopeptides shorter than five residues are hydrolyzed (such as succinyl-Leu-Tyr-|-NHMec, and Leu-Tyr-Leu-|-Tyr-Trp, in which cleavage of the -Tyr-|-Leu- and -Tyr-|-Trp bonds also occurs).. Functionally, cleaves peptides in various proteins in a process that requires ATP hydrolysis. Has a chymotrypsin-like activity. Plays a major role in the degradation of misfolded proteins. This Xylella fastidiosa (strain M23) protein is ATP-dependent Clp protease proteolytic subunit.